The sequence spans 418 residues: 3-isopropylmalate dehydratase large subunit (418 aa).

[4Fe-4S] cluster is bound by residues cysteine 299, cysteine 359, and cysteine 362.

Belongs to the aconitase/IPM isomerase family. LeuC type 2 subfamily. Heterodimer of LeuC and LeuD. [4Fe-4S] cluster serves as cofactor.

The catalysed reaction is (2R,3S)-3-isopropylmalate = (2S)-2-isopropylmalate. It functions in the pathway amino-acid biosynthesis; L-leucine biosynthesis; L-leucine from 3-methyl-2-oxobutanoate: step 2/4. Catalyzes the isomerization between 2-isopropylmalate and 3-isopropylmalate, via the formation of 2-isopropylmaleate. In Oleidesulfovibrio alaskensis (strain ATCC BAA-1058 / DSM 17464 / G20) (Desulfovibrio alaskensis), this protein is 3-isopropylmalate dehydratase large subunit.